A 49-amino-acid polypeptide reads, in one-letter code: Large ribosomal subunit protein bL33B (49 aa).

It belongs to the bacterial ribosomal protein bL33 family.

In Listeria welshimeri serovar 6b (strain ATCC 35897 / DSM 20650 / CCUG 15529 / CIP 8149 / NCTC 11857 / SLCC 5334 / V8), this protein is Large ribosomal subunit protein bL33B.